Reading from the N-terminus, the 563-residue chain is Cystathionine gamma-synthase-like protein ankD (563 aa).

Positions 1–37 are disordered; it reads MGELGPASAQHGSDSISFSGSYTQPLGAPQPPNEPHA. A compositionally biased stretch (polar residues) spans 10-24; that stretch reads QHGSDSISFSGSYTQ.

Belongs to the trans-sulfuration enzymes family. MET7 subfamily. It depends on pyridoxal 5'-phosphate as a cofactor.

It carries out the reaction cyclo(L-arginyl-(Z)-dehydro-3,4-dihydroxytyrosyl) + O-acetyl-L-homoserine = cyclo(L-arginyl-(Z)-dehydro-4-O-homoseryl-tyrosyl) + acetate + H(+). Its pathway is secondary metabolite biosynthesis. Functionally, cystathionine gamma-synthase-like protein; part of the ank cluster that mediates the biosynthesis of NK13650 C, a highly modified cyclo-arginine-tyrosine dipeptide. AnkD catalyzes the attachment of L-homoserine moiety using O-acetyl-L-homoserine as co-substrate. Within the pathway, the cyclodipeptide synthase ankA acts as the scaffold-generating enzyme and is responsible for formation of the cyclo-Arg-Tyr diketopiperazine (cRY) from L-Arg and L-Tyr. The ankA product cRY is desaturated by the cytochrome P450 monooxygenase ankB to yield a dehydro-cyclodipeptide intermediate. The FAD-dependent monooxygenase ankC then installs the m-OH, ankD catalyzes the attachment of L-homoserine, and ankE ligates citrate to the ankD product to yield NK13650 B. The O-methyltransferase ankF is responsible for methylation of the C-17 phenol group of NK13650 B to produce NK13650 D. Amidation of NK13650 D with L-Asp by ankG then leads to the production of NK13650 C, whereas amidation of NK13650 B produces NK13650 A. This Aspergillus thermomutatus (Neosartorya pseudofischeri) protein is Cystathionine gamma-synthase-like protein ankD.